The primary structure comprises 446 residues: Tubulin beta-6 chain (446 aa).

The MREI motif motif lies at 1 to 4; that stretch reads MREI. 6 residues coordinate GTP: Q11, E69, S138, G142, T143, and G144. E69 contacts Mg(2+). S172 carries the post-translational modification Phosphoserine; by CDK1. The GTP site is built by N204 and N226. 5-glutamyl polyglutamate is present on E438.

It belongs to the tubulin family. In terms of assembly, dimer of alpha and beta chains. A typical microtubule is a hollow water-filled tube with an outer diameter of 25 nm and an inner diameter of 15 nM. Alpha-beta heterodimers associate head-to-tail to form protofilaments running lengthwise along the microtubule wall with the beta-tubulin subunit facing the microtubule plus end conferring a structural polarity. Microtubules usually have 13 protofilaments but different protofilament numbers can be found in some organisms and specialized cells. Mg(2+) is required as a cofactor. Some glutamate residues at the C-terminus are polyglutamylated, resulting in polyglutamate chains on the gamma-carboxyl group. Polyglutamylation plays a key role in microtubule severing by spastin (SPAST). SPAST preferentially recognizes and acts on microtubules decorated with short polyglutamate tails: severing activity by SPAST increases as the number of glutamates per tubulin rises from one to eight, but decreases beyond this glutamylation threshold. Glutamylation is also involved in cilia motility. In terms of processing, some glutamate residues at the C-terminus are monoglycylated but not polyglycylated due to the absence of functional TTLL10 in human. Monoglycylation is mainly limited to tubulin incorporated into cilia and flagella axonemes, which is required for their stability and maintenance. Flagella glycylation controls sperm motility. Both polyglutamylation and monoglycylation can coexist on the same protein on adjacent residues, and lowering glycylation levels increases polyglutamylation, and reciprocally. Post-translationally, phosphorylated on Ser-172 by CDK1 during the cell cycle, from metaphase to telophase, but not in interphase. This phosphorylation inhibits tubulin incorporation into microtubules. As to expression, ubiquitous. Maximal expression in breast and lung, where it represents around 10% of all beta-tubulins. Largely decreased expression in most cancerous tissues.

It is found in the cytoplasm. The protein localises to the cytoskeleton. Tubulin is the major constituent of microtubules, a cylinder consisting of laterally associated linear protofilaments composed of alpha- and beta-tubulin heterodimers. Microtubules grow by the addition of GTP-tubulin dimers to the microtubule end, where a stabilizing cap forms. Below the cap, tubulin dimers are in GDP-bound state, owing to GTPase activity of alpha-tubulin. The sequence is that of Tubulin beta-6 chain (TUBB6) from Homo sapiens (Human).